The chain runs to 483 residues: Cysteine proteinase 1, mitochondrial (483 aa).

The transit peptide at 1 to 30 (MLPTSVSWSLYLKTFRSHLLRAPQIVLKRM) directs the protein to the mitochondrion. Active-site residues include cysteine 102, histidine 398, and asparagine 421. Lysine 483 is a propeptide (removed in mature form; by autocatalysis).

This sequence belongs to the peptidase C1 family. In terms of assembly, homohexamer. Binds to nucleic acids. Binds single-stranded DNA and RNA with higher affinity than double-stranded DNA. The N-terminus of isoform Cytoplasmic is blocked.

The protein resides in the mitochondrion. Its subcellular location is the cytoplasm. The catalysed reaction is Inactivates bleomycin B2 (a cytotoxic glycometallopeptide) by hydrolysis of a carboxyamide bond of beta-aminoalanine, but also shows general aminopeptidase activity. The specificity varies somewhat with source, but amino acid arylamides of Met, Leu and Ala are preferred.. Inhibited by E64, a specific inhibitor of cysteine proteases, N-ethylmaleimide, iodacetamide, and mercury and zinc ions. In terms of biological role, the normal physiological role of the enzyme is unknown, but it is not essential for the viability of yeast cells. Has aminopeptidase activity, shortening substrate peptides sequentially by 1 amino acid. Has bleomycin hydrolase activity, which can protect the cell from the toxic effects of bleomycin. Has homocysteine-thiolactonase activity, protecting the cell against homocysteine toxicity. Acts as a repressor in the GAL4 regulatory system, but this does not require either the peptidase or nucleic acid-binding activities. The polypeptide is Cysteine proteinase 1, mitochondrial (LAP3) (Saccharomyces cerevisiae (strain YJM789) (Baker's yeast)).